Consider the following 309-residue polypeptide: Protein FdhE (309 aa).

This sequence belongs to the FdhE family.

Its subcellular location is the cytoplasm. Its function is as follows. Necessary for formate dehydrogenase activity. This chain is Protein FdhE, found in Escherichia coli O127:H6 (strain E2348/69 / EPEC).